The following is a 358-amino-acid chain: MVLVATLFSLFTVSLCRSIPRSSPSSSPYTQATDLKIHDPTVINANGAYYAYGVGEHIVIHQAPGLAGPWKQIGSVLDKDSIIPKGDRAKPWAPTTIEVKGTFYCYYSVSNAGCRDSAIGVATSQSPGPGGWTDHGAIVQSGTGQGSDEHPFNEVNAIDPAVLVTGDKGHLVFGSYWSGIWQVPLNEDFSSVGNTTGLNAHHLAKHPKTERVNSQDQNPDPLCRDSSGRRPVEGAYISYHAPYYYLWLSWGQCCDYDPNNLPPSGEEYSIRVGRSESPHGPFVDKQGKELTQGGGELIYGSNNDVYAPGGQGVITVETGDILYYHYCESLFFRGLSEARLGYSYLGYVDGWPVIREAP.

The signal sequence occupies residues 1–16; the sequence is MVLVATLFSLFTVSLC. D39 functions as the Proton acceptor in the catalytic mechanism. N194 carries N-linked (GlcNAc...) asparagine glycosylation. The tract at residues 202 to 227 is disordered; that stretch reads HLAKHPKTERVNSQDQNPDPLCRDSS. Catalysis depends on E233, which acts as the Proton donor.

The protein belongs to the glycosyl hydrolase 43 family.

The protein localises to the secreted. The catalysed reaction is Endohydrolysis of (1-&gt;5)-alpha-arabinofuranosidic linkages in (1-&gt;5)-arabinans.. It functions in the pathway glycan metabolism; L-arabinan degradation. Endo-1,5-alpha-L-arabinanase involved in degradation of pectin. Its preferred substrate is linear 1,5-alpha-L-arabinan. In Aspergillus flavus (strain ATCC 200026 / FGSC A1120 / IAM 13836 / NRRL 3357 / JCM 12722 / SRRC 167), this protein is Probable arabinan endo-1,5-alpha-L-arabinosidase B (abnB).